The sequence spans 293 residues: 4-diphosphocytidyl-2-C-methyl-D-erythritol kinase (293 aa).

The active site involves K16. 99-109 (PMGAGLGGGSS) contacts ATP. Residue D141 is part of the active site.

Belongs to the GHMP kinase family. IspE subfamily.

The catalysed reaction is 4-CDP-2-C-methyl-D-erythritol + ATP = 4-CDP-2-C-methyl-D-erythritol 2-phosphate + ADP + H(+). It functions in the pathway isoprenoid biosynthesis; isopentenyl diphosphate biosynthesis via DXP pathway; isopentenyl diphosphate from 1-deoxy-D-xylulose 5-phosphate: step 3/6. In terms of biological role, catalyzes the phosphorylation of the position 2 hydroxy group of 4-diphosphocytidyl-2C-methyl-D-erythritol. The polypeptide is 4-diphosphocytidyl-2-C-methyl-D-erythritol kinase (Paraburkholderia xenovorans (strain LB400)).